Here is a 499-residue protein sequence, read N- to C-terminus: Hepatic triacylglycerol lipase (499 aa).

Residues M1–T21 form the signal peptide. N78 carries an N-linked (GlcNAc...) asparagine glycan. Residue S168 is the Nucleophile of the active site. Catalysis depends on D194, which acts as the Charge relay system. The tract at residues C254–C277 is essential for determining substrate specificity. H279 functions as the Charge relay system in the catalytic mechanism. A PLAT domain is found at Y352–R486. A glycan (N-linked (GlcNAc...) asparagine) is linked at N397.

It belongs to the AB hydrolase superfamily. Lipase family. In terms of assembly, homodimer.

It localises to the secreted. The enzyme catalyses a triacylglycerol + H2O = a diacylglycerol + a fatty acid + H(+). It catalyses the reaction a 1-acyl-sn-glycero-3-phosphocholine + H2O = sn-glycerol 3-phosphocholine + a fatty acid + H(+). It carries out the reaction a 1,2-diacyl-sn-glycero-3-phosphocholine + H2O = a 2-acyl-sn-glycero-3-phosphocholine + a fatty acid + H(+). The catalysed reaction is 1,2,3-tri-(9Z-octadecenoyl)-glycerol + H2O = di-(9Z)-octadecenoylglycerol + (9Z)-octadecenoate + H(+). The enzyme catalyses 1,2-di-(9Z-octadecenoyl)-sn-glycero-3-phosphocholine + H2O = (9Z-octadecenoyl)-sn-glycero-3-phosphocholine + (9Z)-octadecenoate + H(+). It catalyses the reaction 1,2,3-tributanoylglycerol + H2O = dibutanoylglycerol + butanoate + H(+). It carries out the reaction 1,2-dihexadecanoyl-sn-glycero-3-phosphocholine + H2O = hexadecanoyl-sn-glycero-3-phosphocholine + hexadecanoate + H(+). The catalysed reaction is 1,2-di-(9Z-octadecenoyl)-sn-glycerol + H2O = 2-(9Z-octadecenoyl)-glycerol + (9Z)-octadecenoate + H(+). The enzyme catalyses 1,2,3-tri-(9Z-octadecenoyl)-glycerol + H2O = 2,3-di-(9Z)-octadecenoyl-sn-glycerol + (9Z)-octadecenoate + H(+). It catalyses the reaction 1-(9Z-octadecenoyl)-sn-glycero-3-phospho-L-serine + H2O = sn-glycero-3-phospho-L-serine + (9Z)-octadecenoate + H(+). It carries out the reaction 1-hexadecanoyl-sn-glycero-3-phosphocholine + H2O = sn-glycerol 3-phosphocholine + hexadecanoate + H(+). The catalysed reaction is 1,3-di-(9Z-octadecenoyl)-glycerol + H2O = 3-(9Z-octadecenoyl)-sn-glycerol + (9Z)-octadecenoate + H(+). Its function is as follows. Catalyzes the hydrolysis of triglycerides and phospholipids present in circulating plasma lipoproteins, including chylomicrons, intermediate density lipoproteins (IDL), low density lipoproteins (LDL) of large size and high density lipoproteins (HDL), releasing free fatty acids (FFA) and smaller lipoprotein particles. Also exhibits lysophospholipase activity. Can hydrolyze both neutral lipid and phospholipid substrates but shows a greater binding affinity for neutral lipid substrates than phospholipid substrates. In native LDL, preferentially hydrolyzes the phosphatidylcholine species containing polyunsaturated fatty acids at sn-2 position. In Oryctolagus cuniculus (Rabbit), this protein is Hepatic triacylglycerol lipase (LIPC).